The chain runs to 262 residues: Dehydrin COR410 (262 aa).

Disordered stretches follow at residues 1–153 and 187–262; these read MEDE…HDTD and LPGG…KPSA. Basic and acidic residues-rich tracts occupy residues 34–45 and 53–74; these read KKAEEDKEKEEE and VSVEEPEVKKEEHEDGEKKETL. Positions 89–101 are enriched in acidic residues; the sequence is SDEEEEEVIDDNG. 2 repeat units span residues 106-126 and 173-193. The 3 X 21 AA repeats, Lys-rich stretch occupies residues 106-245; it reads RKKKKGLKEK…MDKLPGYHKT (140 aa). Composition is skewed to basic and acidic residues over residues 113–130 and 187–196; these read KEKLQGKLPGHKDTEGEH and LPGGHKKPED. The span at 197–209 shows a compositional bias: low complexity; that stretch reads AAAVPVTHAAPAP. Residues 225–245 form repeat 3; the sequence is AKEKKGLLGKIMDKLPGYHKT. Residues 244–262 are compositionally biased toward basic and acidic residues; it reads KTGEEDKAAAATGEHKPSA.

Expressed in roots, crown and leaves during cold acclimation.

This chain is Dehydrin COR410 (COR410), found in Triticum aestivum (Wheat).